Consider the following 545-residue polypeptide: CTP synthase (545 aa).

The tract at residues 1 to 266 (MTTRYIFVTG…DELVIKRFNI (266 aa)) is amidoligase domain. Ser-14 contacts CTP. Position 14 (Ser-14) interacts with UTP. Residues 15–20 (SLGKGI) and Asp-72 each bind ATP. The Mg(2+) site is built by Asp-72 and Glu-140. Residues 147–149 (DIE), 187–192 (KTKPTQ), and Lys-223 each bind CTP. Residues 187 to 192 (KTKPTQ) and Lys-223 each bind UTP. Residue 239–241 (KDV) participates in ATP binding. Residues 291-542 (TIGMVGKYIE…IAASLSHQKR (252 aa)) form the Glutamine amidotransferase type-1 domain. L-glutamine is bound at residue Gly-352. The active-site Nucleophile; for glutamine hydrolysis is Cys-379. L-glutamine-binding positions include 380–383 (LGMQ), Glu-403, and Arg-470. Residues His-515 and Glu-517 contribute to the active site.

The protein belongs to the CTP synthase family. As to quaternary structure, homotetramer.

It catalyses the reaction UTP + L-glutamine + ATP + H2O = CTP + L-glutamate + ADP + phosphate + 2 H(+). The catalysed reaction is L-glutamine + H2O = L-glutamate + NH4(+). It carries out the reaction UTP + NH4(+) + ATP = CTP + ADP + phosphate + 2 H(+). It participates in pyrimidine metabolism; CTP biosynthesis via de novo pathway; CTP from UDP: step 2/2. Its activity is regulated as follows. Allosterically activated by GTP, when glutamine is the substrate; GTP has no effect on the reaction when ammonia is the substrate. The allosteric effector GTP functions by stabilizing the protein conformation that binds the tetrahedral intermediate(s) formed during glutamine hydrolysis. Inhibited by the product CTP, via allosteric rather than competitive inhibition. In terms of biological role, catalyzes the ATP-dependent amination of UTP to CTP with either L-glutamine or ammonia as the source of nitrogen. Regulates intracellular CTP levels through interactions with the four ribonucleotide triphosphates. In Shewanella denitrificans (strain OS217 / ATCC BAA-1090 / DSM 15013), this protein is CTP synthase.